The primary structure comprises 197 residues: Syndecan-4 (197 aa).

An N-terminal signal peptide occupies residues 1–19 (MPLPRAAFLLGLLLAAAAA). Over 20–147 (ESVRETETMD…SIFERTEVLT (128 aa)) the chain is Extracellular. Ser38, Ser65, and Ser67 each carry an O-linked (Xyl...) (glycosaminoglycan) serine glycan. Residues Asn124 and Asn136 are each glycosylated (N-linked (GlcNAc...) asparagine). A helical membrane pass occupies residues 148-168 (ALIAGGAVGLLFAVFLILLLV). Topologically, residues 169-197 (YRMKKKDEGSYDLGKKPIYKKAPTNEFYA) are cytoplasmic.

It belongs to the syndecan proteoglycan family. As to quaternary structure, interacts with SDOS. In terms of processing, O-glycosylated; contains both chondroitin sulfate and heparan sulfate. Ser-38, Ser-65 and Ser-67 can all be modified by either chondroitin sulfate or heparan sulfate, and the protein exists in forms that contain only chondroitin sulfate, only heparan sulfate and both chondroitin sulfate and heparan sulfate.

It localises to the membrane. Functionally, cell surface proteoglycan which regulates exosome biogenesis in concert with SDCBP and PDCD6IP. This Gallus gallus (Chicken) protein is Syndecan-4 (SDC4).